Reading from the N-terminus, the 166-residue chain is NAD(P)H-quinone oxidoreductase subunit I, chloroplastic (166 aa).

4Fe-4S ferredoxin-type domains are found at residues 55–84 (GRIH…VDWK) and 95–124 (LNYS…MTEE). Positions 64, 67, 70, 74, 104, 107, 110, and 114 each coordinate [4Fe-4S] cluster.

It belongs to the complex I 23 kDa subunit family. As to quaternary structure, NDH is composed of at least 16 different subunits, 5 of which are encoded in the nucleus. Requires [4Fe-4S] cluster as cofactor.

Its subcellular location is the plastid. The protein resides in the chloroplast thylakoid membrane. It catalyses the reaction a plastoquinone + NADH + (n+1) H(+)(in) = a plastoquinol + NAD(+) + n H(+)(out). The enzyme catalyses a plastoquinone + NADPH + (n+1) H(+)(in) = a plastoquinol + NADP(+) + n H(+)(out). Its function is as follows. NDH shuttles electrons from NAD(P)H:plastoquinone, via FMN and iron-sulfur (Fe-S) centers, to quinones in the photosynthetic chain and possibly in a chloroplast respiratory chain. The immediate electron acceptor for the enzyme in this species is believed to be plastoquinone. Couples the redox reaction to proton translocation, and thus conserves the redox energy in a proton gradient. The polypeptide is NAD(P)H-quinone oxidoreductase subunit I, chloroplastic (Silphium perfoliatum (Cup plant)).